Here is a 423-residue protein sequence, read N- to C-terminus: MTEFSSFSAPKGVPDYVPPDSAQFVAVRDGLLAAARQAGYSHIELPIFEDTALFARGVGESTDVVSKEMYTFADRGDRSVTLRPEGTAGVVRAVIEHGLDRGALPVKLCYAGPFFRYERPQAGRYRQLQQVGVEAIGVDDPALDAEVIAIADAGFRSLGLDGFRLEITSLGDESCRPQYRELLQEFLFGLDLDEDTRRRAGINPLRVLDDKRPELRAMTASAPVLLDHLSDVAKQHFDTVLAHLDALGVPYVINPRMVRGLDYYTKTAFEFVHDGLGAQSGIGGGGRYDGLMHQLGGQDLSGIGFGLGVDRTVLALRAEGKTAGDSARCDVFGVPLGEAAKLRLAVLAGRLRAAGVRVDLAYGDRGLKGAMRAAARSGARVALVAGDRDIEAGTVAVKDLTTGEQVSVSMDSVVAEVISRLAG.

Belongs to the class-II aminoacyl-tRNA synthetase family. As to quaternary structure, homodimer.

The protein localises to the cytoplasm. The enzyme catalyses tRNA(His) + L-histidine + ATP = L-histidyl-tRNA(His) + AMP + diphosphate + H(+). This is Histidine--tRNA ligase (hisS) from Mycobacterium bovis (strain ATCC BAA-935 / AF2122/97).